The primary structure comprises 121 residues: Trypsin/alpha-amylase inhibitor CMX1/CMX3 (121 aa).

The first 24 residues, 1–24, serve as a signal peptide directing secretion; the sequence is MAFKHQLILSTAILLAVLAAASAS.

This sequence belongs to the protease inhibitor I6 (cereal trypsin/alpha-amylase inhibitor) family.

It is found in the secreted. The chain is Trypsin/alpha-amylase inhibitor CMX1/CMX3 from Triticum aestivum (Wheat).